The sequence spans 32 residues: Cytochrome b6-f complex subunit 7 (32 aa).

A helical transmembrane segment spans residues 5-25; that stretch reads FIASASISFIITLIGLTLGFA.

It belongs to the PetM family. The 4 large subunits of the cytochrome b6-f complex are cytochrome b6, subunit IV (17 kDa polypeptide, PetD), cytochrome f and the Rieske protein, while the 4 small subunits are PetG, PetL, PetM and PetN. The complex functions as a dimer.

It is found in the plastid. It localises to the chloroplast thylakoid membrane. In terms of biological role, component of the cytochrome b6-f complex, which mediates electron transfer between photosystem II (PSII) and photosystem I (PSI), cyclic electron flow around PSI, and state transitions. This Guillardia theta (Cryptophyte) protein is Cytochrome b6-f complex subunit 7.